A 239-amino-acid chain; its full sequence is Ribonuclease 3 (239 aa).

The RNase III domain maps to 12–137; it reads RAKLESLIGH…LIAAIYLDGG (126 aa). E50 is a Mg(2+) binding site. D54 is an active-site residue. The Mg(2+) site is built by D123 and E126. E126 is an active-site residue. The DRBM domain occupies 162–231; sequence DAKTELQEWS…ATKMLEREGI (70 aa).

It belongs to the ribonuclease III family. Homodimer. Requires Mg(2+) as cofactor.

Its subcellular location is the cytoplasm. It carries out the reaction Endonucleolytic cleavage to 5'-phosphomonoester.. Digests double-stranded RNA. Involved in the processing of primary rRNA transcript to yield the immediate precursors to the large and small rRNAs (23S and 16S). Processes some mRNAs, and tRNAs when they are encoded in the rRNA operon. Processes pre-crRNA and tracrRNA of type II CRISPR loci if present in the organism. In Rhizobium etli (strain CIAT 652), this protein is Ribonuclease 3.